Consider the following 534-residue polypeptide: Probable protein kinase UbiB (534 aa).

The helical transmembrane segment at 23-43 (DLLFDLPLPWFLLALRYVLPW) threads the bilayer. Residues 125–492 (RFDVEPLASA…WKKRKDDWFL (368 aa)) enclose the Protein kinase domain. ATP-binding positions include 131–139 (LASASVAQV) and lysine 153. Aspartate 288 (proton acceptor) is an active-site residue. 2 helical membrane-spanning segments follow: residues 490 to 510 (WFLR…AAGG) and 512 to 532 (LHEL…YLVV).

It belongs to the ABC1 family. UbiB subfamily.

The protein localises to the cell inner membrane. It participates in cofactor biosynthesis; ubiquinone biosynthesis [regulation]. Functionally, is probably a protein kinase regulator of UbiI activity which is involved in aerobic coenzyme Q (ubiquinone) biosynthesis. The sequence is that of Probable protein kinase UbiB from Pseudomonas fluorescens (strain Pf0-1).